Reading from the N-terminus, the 178-residue chain is Putative adenylate kinase (178 aa).

5 residues coordinate ATP: Gly-10, Gly-12, Lys-13, Ser-14, and Ser-15. Residues 29–50 (TVVELAEKHGCIIDEEDGEIVI) form an NMP region. Residues 94 to 104 (GRNWSEEKLLE) are LID. ATP is bound at residue Arg-95.

Belongs to the adenylate kinase family. AK6 subfamily. Interacts with uS11. Not a structural component of 40S pre-ribosomes, but transiently interacts with them by binding to uS11.

It catalyses the reaction AMP + ATP = 2 ADP. It carries out the reaction ATP + H2O = ADP + phosphate + H(+). Its function is as follows. Broad-specificity nucleoside monophosphate (NMP) kinase that catalyzes the reversible transfer of the terminal phosphate group between nucleoside triphosphates and monophosphates. Also has ATPase activity. Involved in the late maturation steps of the 30S ribosomal particles, specifically 16S rRNA maturation. While NMP activity is not required for ribosome maturation, ATPase activity is. Associates transiently with small ribosomal subunit protein uS11. ATP hydrolysis breaks the interaction with uS11. May temporarily remove uS11 from the ribosome to enable a conformational change of the ribosomal RNA that is needed for the final maturation step of the small ribosomal subunit. The protein is Putative adenylate kinase of Archaeoglobus fulgidus (strain ATCC 49558 / DSM 4304 / JCM 9628 / NBRC 100126 / VC-16).